The following is a 794-amino-acid chain: Protein transport protein SEC23 G (794 aa).

The Zn(2+) site is built by C56, C59, C78, and C81. The segment at 56–81 (CSRCGAVLNPYARVDYQSRIWSCPFC) is zinc finger-like.

This sequence belongs to the SEC23/SEC24 family. SEC23 subfamily. As to quaternary structure, component of the coat protein complex II (COPII), composed of at least five proteins: the Sec23/24 complex, the Sec13/31 complex and Sar1. Interacts with SEC24A.

The protein localises to the cytoplasmic vesicle. The protein resides in the COPII-coated vesicle membrane. It is found in the endoplasmic reticulum membrane. It localises to the membrane. In terms of biological role, component of the coat protein complex II (COPII) which promotes the formation of transport vesicles from the endoplasmic reticulum (ER). The coat has two main functions, the physical deformation of the endoplasmic reticulum membrane into vesicles and the selection of cargo molecules. The sequence is that of Protein transport protein SEC23 G from Arabidopsis thaliana (Mouse-ear cress).